Consider the following 200-residue polypeptide: Lipopolysaccharide core heptose(II)-phosphate phosphatase (200 aa).

The signal sequence occupies residues 1 to 25 (MLAFCRSSLKSKKYIIILLALAAIA).

Belongs to the phosphoglycerate mutase family. Ais subfamily.

It is found in the periplasm. Its pathway is bacterial outer membrane biogenesis; lipopolysaccharide metabolism. In terms of biological role, catalyzes the dephosphorylation of heptose(II) of the outer membrane lipopolysaccharide core. The chain is Lipopolysaccharide core heptose(II)-phosphate phosphatase from Escherichia coli (strain ATCC 8739 / DSM 1576 / NBRC 3972 / NCIMB 8545 / WDCM 00012 / Crooks).